A 225-amino-acid chain; its full sequence is UPF0758 protein Bpet3149 (225 aa).

Positions 103–225 (AMSEPGSVKR…VVSMAELGLL (123 aa)) constitute an MPN domain. Zn(2+) is bound by residues histidine 174, histidine 176, and aspartate 187. The JAMM motif signature appears at 174–187 (HNHPSGSAQPSQAD).

It belongs to the UPF0758 family.

The polypeptide is UPF0758 protein Bpet3149 (Bordetella petrii (strain ATCC BAA-461 / DSM 12804 / CCUG 43448)).